The following is a 1755-amino-acid chain: Transposon Ty1-ER1 Gag-Pol polyprotein (1755 aa).

3 stretches are compositionally biased toward polar residues: residues 1–23 (MESQ…SVTS), 48–60 (TKAN…TPAS), and 127–152 (QSQF…GNTF). 3 disordered regions span residues 1–93 (MESQ…MMTQ), 126–174 (PQSQ…PPPM), and 352–421 (GSRN…SKST). The span at 153–165 (TDSSSADSDMTST) shows a compositional bias: low complexity. The segment at 299 to 401 (NNGIHINNKV…NSKSKTARAH (103 aa)) is RNA-binding. Residues 402–418 (NVSTSNNSPSTDNDSIS) are compositionally biased toward low complexity. Ser-416 bears the Phosphoserine mark. Asp-461 acts as the For protease activity; shared with dimeric partner in catalysis. The segment at 583–640 (NVHTSESTRKYPYPFIHRMLAHANAQTIRYSLKNNTITYFNESDVDWSSAIDYQCPDC) is integrase-type zinc finger-like. The region spanning 660–835 (NSYEPFQYLH…AGLDISTLLP (176 aa)) is the Integrase catalytic domain. 2 residues coordinate Mg(2+): Asp-671 and Asp-736. 3 disordered regions span residues 956 to 1087 (SKAV…ETEK), 1092 to 1111 (RSPS…NIVP), and 1130 to 1171 (DLPL…DSNA). Over residues 960-969 (SPTDSTPPST) the composition is skewed to low complexity. The span at 1005–1015 (STPQISNIEST) shows a compositional bias: polar residues. Basic and acidic residues predominate over residues 1038 to 1053 (ESSHASKSKDFRHSDS). 2 stretches are compositionally biased toward polar residues: residues 1054–1082 (YSEN…QISD) and 1101–1111 (PENNSSHNIVP). A Bipartite nuclear localization signal motif is present at residues 1178 to 1212 (KKRSLEDNETEIKVSRDTWNTKNMRSLEPPRSKKR). Residues 1338 to 1476 (NNYYITQLDI…DILGLEIKYQ (139 aa)) enclose the Reverse transcriptase Ty1/copia-type domain. Positions 1346, 1427, 1428, 1610, 1652, and 1685 each coordinate Mg(2+). The region spanning 1610–1752 (DASYGNQPYY…IKTFKLLTNK (143 aa)) is the RNase H Ty1/copia-type domain.

In terms of assembly, the capsid protein forms a homotrimer, from which the VLPs are assembled. The protease is a homodimer, whose active site consists of two apposed aspartic acid residues. In terms of processing, initially, virus-like particles (VLPs) are composed of the structural unprocessed proteins Gag and Gag-Pol, and also contain the host initiator methionine tRNA (tRNA(i)-Met) which serves as a primer for minus-strand DNA synthesis, and a dimer of genomic Ty RNA. Processing of the polyproteins occurs within the particle and proceeds by an ordered pathway, called maturation. First, the protease (PR) is released by autocatalytic cleavage of the Gag-Pol polyprotein yielding capsid protein p45 and a Pol-p154 precursor protein. This cleavage is a prerequisite for subsequent processing of Pol-p154 at the remaining sites to release the mature structural and catalytic proteins. Maturation takes place prior to the RT reaction and is required to produce transposition-competent VLPs.

Its subcellular location is the cytoplasm. The protein resides in the nucleus. It catalyses the reaction DNA(n) + a 2'-deoxyribonucleoside 5'-triphosphate = DNA(n+1) + diphosphate. The catalysed reaction is Endonucleolytic cleavage to 5'-phosphomonoester.. Functionally, capsid protein (CA) is the structural component of the virus-like particle (VLP), forming the shell that encapsulates the retrotransposons dimeric RNA genome. The particles are assembled from trimer-clustered units and there are holes in the capsid shells that allow for the diffusion of macromolecules. CA also has nucleocapsid-like chaperone activity, promoting primer tRNA(i)-Met annealing to the multipartite primer-binding site (PBS), dimerization of Ty1 RNA and initiation of reverse transcription. Its function is as follows. The aspartyl protease (PR) mediates the proteolytic cleavages of the Gag and Gag-Pol polyproteins after assembly of the VLP. Reverse transcriptase/ribonuclease H (RT) is a multifunctional enzyme that catalyzes the conversion of the retro-elements RNA genome into dsDNA within the VLP. The enzyme displays a DNA polymerase activity that can copy either DNA or RNA templates, and a ribonuclease H (RNase H) activity that cleaves the RNA strand of RNA-DNA heteroduplexes during plus-strand synthesis and hydrolyzes RNA primers. The conversion leads to a linear dsDNA copy of the retrotransposon that includes long terminal repeats (LTRs) at both ends. In terms of biological role, integrase (IN) targets the VLP to the nucleus, where a subparticle preintegration complex (PIC) containing at least integrase and the newly synthesized dsDNA copy of the retrotransposon must transit the nuclear membrane. Once in the nucleus, integrase performs the integration of the dsDNA into the host genome. In Saccharomyces cerevisiae (strain ATCC 204508 / S288c) (Baker's yeast), this protein is Transposon Ty1-ER1 Gag-Pol polyprotein (TY1B-ER1).